The following is a 426-amino-acid chain: Serine--tRNA ligase (426 aa).

227–229 serves as a coordination point for L-serine; sequence TSE. ATP is bound by residues 258–260 and Val-274; that span reads RKE. Glu-281 lines the L-serine pocket. 345-348 lines the ATP pocket; that stretch reads ELTS. An L-serine-binding site is contributed by Thr-380.

Belongs to the class-II aminoacyl-tRNA synthetase family. Type-1 seryl-tRNA synthetase subfamily. As to quaternary structure, homodimer. The tRNA molecule binds across the dimer.

The protein localises to the cytoplasm. The enzyme catalyses tRNA(Ser) + L-serine + ATP = L-seryl-tRNA(Ser) + AMP + diphosphate + H(+). The catalysed reaction is tRNA(Sec) + L-serine + ATP = L-seryl-tRNA(Sec) + AMP + diphosphate + H(+). The protein operates within aminoacyl-tRNA biosynthesis; selenocysteinyl-tRNA(Sec) biosynthesis; L-seryl-tRNA(Sec) from L-serine and tRNA(Sec): step 1/1. In terms of biological role, catalyzes the attachment of serine to tRNA(Ser). Is also able to aminoacylate tRNA(Sec) with serine, to form the misacylated tRNA L-seryl-tRNA(Sec), which will be further converted into selenocysteinyl-tRNA(Sec). The sequence is that of Serine--tRNA ligase from Clavibacter michiganensis subsp. michiganensis (strain NCPPB 382).